Reading from the N-terminus, the 830-residue chain is Periplasmic nitrate reductase 2 (830 aa).

A signal peptide (tat-type signal) is located at residues 1–31 (MKVSRRKFIKAQAVASAAAAAGISIPISASN). The region spanning 41-97 (ITWEKAPCRFCGTGCSVNVGTKEGKVVATHGDIKSPVNRGLNCVKGYFLSKIMYGKD) is the 4Fe-4S Mo/W bis-MGD-type domain. Positions 48, 51, 55, and 83 each coordinate [4Fe-4S] cluster. Residues Lys-85, Gln-152, Asn-177, Cys-181, 245 to 249 (STFEH), 264 to 266 (QSD), Met-374, Gln-378, Asn-484, 510 to 511 (SE), Lys-533, Asp-560, and 720 to 729 (TGRVIEHWHS) each bind Mo-bis(molybdopterin guanine dinucleotide). A substrate-binding site is contributed by Trp-796. Mo-bis(molybdopterin guanine dinucleotide)-binding residues include Asn-804 and Lys-821.

This sequence belongs to the prokaryotic molybdopterin-containing oxidoreductase family. NasA/NapA/NarB subfamily. In terms of assembly, component of the periplasmic nitrate reductase NapAB complex composed of NapA and NapB. The cofactor is [4Fe-4S] cluster. It depends on Mo-bis(molybdopterin guanine dinucleotide) as a cofactor. Post-translationally, predicted to be exported by the Tat system. The position of the signal peptide cleavage has not been experimentally proven.

Its subcellular location is the periplasm. It carries out the reaction 2 Fe(II)-[cytochrome] + nitrate + 2 H(+) = 2 Fe(III)-[cytochrome] + nitrite + H2O. Functionally, catalytic subunit of the periplasmic nitrate reductase complex NapAB. Receives electrons from NapB and catalyzes the reduction of nitrate to nitrite. The protein is Periplasmic nitrate reductase 2 of Photobacterium profundum (strain SS9).